The sequence spans 298 residues: Cytochrome c oxidase subunit 2 (298 aa).

A signal peptide spans 1–29 (MMAIATKRRGVAAVMSLGVATMTAVPALA). Pyrrolidone carboxylic acid is present on Gln30. The Periplasmic portion of the chain corresponds to 30–55 (QDVLGDLPVIGKPVNGGMNFQPASSP). Residues 56–88 (LAHDQQWLDHFVLYIITAVTIFVCLLLLICIVR) form a helical membrane-spanning segment. Residues 89–103 (FNRRANPVPARFTHN) lie on the Cytoplasmic side of the membrane. A helical transmembrane segment spans residues 104-134 (TPIEVIWTLVPVLILVAIGAFSLPILFRSQE). Topologically, residues 135-280 (MPNDPDLVIK…WLAGAKEEFA (146 aa)) are periplasmic. Cu cation-binding residues include His210, Cys245, Glu247, Cys249, His253, and Met256. A propeptide spans 281-298 (ADASDYLPASPVKLASAE) (C-terminal propeptide).

It belongs to the cytochrome c oxidase subunit 2 family. Requires binuclear copper center (CuA) as cofactor.

The protein resides in the cell inner membrane. It carries out the reaction 4 Fe(II)-[cytochrome c] + O2 + 8 H(+)(in) = 4 Fe(III)-[cytochrome c] + 2 H2O + 4 H(+)(out). Its function is as follows. Subunits I and II form the functional core of the enzyme complex. Electrons originating in cytochrome c are transferred via heme a and Cu(A) to the binuclear center formed by heme a3 and Cu(B). In Paracoccus denitrificans, this protein is Cytochrome c oxidase subunit 2 (ctaC).